Reading from the N-terminus, the 677-residue chain is Potassium channel KAT1 (677 aa).

At 1 to 63 (MSISWTRNFF…PFNPRYRAWE (63 aa)) the chain is on the cytoplasmic side. A helical transmembrane segment spans residues 64–84 (MWLVLLVIYSAWICPFQFAFI). The Extracellular portion of the chain corresponds to 85-90 (TYKKDA). A helical transmembrane segment spans residues 91–111 (IFIIDNIVNGFFAIDIILTFF). The Cytoplasmic portion of the chain corresponds to 112-134 (VAYLDSHSYLLVDSPKKIAIRYL). The chain crosses the membrane as a helical span at residues 135 to 155 (STWFAFDVCSTAPFQPLSLLF). At 156 to 165 (NYNGSELGFR) the chain is on the extracellular side. Residues 166–186 (ILSMLRLWRLRRVSSLFARLE) form a helical; Voltage-sensor membrane-spanning segment. Residues 187–200 (KDIRFNYFWIRCTK) lie on the Cytoplasmic side of the membrane. The helical transmembrane segment at 201 to 221 (LISVTLFAIHCAGCFNYLIAD) threads the bilayer. Topologically, residues 222–248 (RYPNPRKTWIGAVYPNFKEASLWNRYV) are extracellular. The pore-forming intramembrane region spans 249-268 (TALYWSITTLTTTGYGDFHA). The Extracellular segment spans residues 269–272 (ENPR). A helical membrane pass occupies residues 273-293 (EMLFDIFFMMFNLGLTAYLIG). Over 294-677 (NMTNLVVHWT…DGDHLYFSSN (384 aa)) the chain is Cytoplasmic. An a nucleoside 3',5'-cyclic phosphate-binding site is contributed by 377 to 496 (LFQGVSRNFL…RVIMNNLFMK (120 aa)). A compositionally biased stretch (basic and acidic residues) spans 568-577 (IERAKVERSS). The segment at 568–601 (IERAKVERSSSETAGRSYANDSSKKDPYCSSSNQ) is disordered. The 66-residue stretch at 612-677 (RVTIHMMSES…DGDHLYFSSN (66 aa)) folds into the KHA domain.

The protein belongs to the potassium channel family. Plant (TC 1.A.1.4) subfamily. As to quaternary structure, the potassium channel is probably composed of a homo- or heterotetrameric complex of pore-forming subunits. May interact with AKT2 and KAT2. Interacts with SLAC1 and SLAH3. Expressed in guard cells, and in roots.

Its subcellular location is the membrane. Highly selective inward-rectifying potassium channel. This voltage-gated channel could mediate long-term potassium influx into guard cells leading to stomatal opening. Assuming opened or closed conformations in response to the voltage difference across the membrane, the channel is activated by hyperpolarization. The channel activity is enhanced upon external acidification. Also permeable to ammonium ions. Blocked by tetraethylammonium and barium ions. The protein is Potassium channel KAT1 (KAT1) of Arabidopsis thaliana (Mouse-ear cress).